A 332-amino-acid polypeptide reads, in one-letter code: MTKHASLAPLLESFFLQRLMQQRQASPHTISSYRDTFRQLLKFAERRLRKPPSRLNFEEIDAPLIVAFLDDLENRQGISVRSRNLRLTAIHSFFRYAAFEIPEHSAQIQRVLAIPSKRFTRTLVNFLTRPEVDALLAAPDRSTWSGRRDHAFLLVAVQTGLRLSEITGLKRDDLFFGTGAHLRVIGKGRKERCTPFAKSTTAVLRNWLKEPQRGDQGILFPSARGERLSVHGVQYMLNKHRQIASAMSPSLEGKRVTVHRLRHTMAMDLLQAGVDRAVIALWLGHESVETTQIYLEATLAMKEAALAKTSPYSGKSSRFRPDDNLLAFLNSL.

The Core-binding (CB) domain maps to 5 to 98 (ASLAPLLESF…AIHSFFRYAA (94 aa)). The 186-residue stretch at 122-307 (TLVNFLTRPE…TLAMKEAALA (186 aa)) folds into the Tyr recombinase domain. Residues R162, K187, H259, R262, and H285 contribute to the active site. Y294 functions as the O-(3'-phospho-DNA)-tyrosine intermediate in the catalytic mechanism.

Belongs to the 'phage' integrase family.

The protein is Putative integrase/recombinase y4rC of Sinorhizobium fredii (strain NBRC 101917 / NGR234).